A 652-amino-acid polypeptide reads, in one-letter code: Fimbrin-4 (652 aa).

Calponin-homology (CH) domains lie at 116–233 (ESEK…KIQL), 261–364 (LAPE…HHRN), 388–494 (SREE…RYTM), and 509–617 (DITE…NWSL). Actin-binding stretches follow at residues 116 to 364 (ESEK…HHRN) and 388 to 617 (SREE…NWSL). A disordered region spans residues 623-652 (TESTVSDDTDVSSVTEEISNLSTDDGSSDV). Positions 640-652 (ISNLSTDDGSSDV) are enriched in polar residues.

In terms of assembly, interacts with F-actin.

It localises to the cytoplasm. It is found in the cytoskeleton. Cross-links actin filaments (F-actin). Stabilizes and prevents F-actin depolymerization mediated by profilin. May regulate actin cytoarchitecture, cell cycle, cell division, cell elongation and cytoplasmic tractus. The polypeptide is Fimbrin-4 (Arabidopsis thaliana (Mouse-ear cress)).